The sequence spans 399 residues: Aspartate aminotransferase (399 aa).

Positions 42 and 179 each coordinate L-aspartate. Lysine 240 carries the post-translational modification N6-(pyridoxal phosphate)lysine. An L-aspartate-binding site is contributed by arginine 372.

The protein belongs to the class-I pyridoxal-phosphate-dependent aminotransferase family. As to quaternary structure, homodimer. Pyridoxal 5'-phosphate is required as a cofactor.

It localises to the cytoplasm. The enzyme catalyses L-aspartate + 2-oxoglutarate = oxaloacetate + L-glutamate. The polypeptide is Aspartate aminotransferase (aspC) (Sulfurisphaera tokodaii (strain DSM 16993 / JCM 10545 / NBRC 100140 / 7) (Sulfolobus tokodaii)).